A 331-amino-acid polypeptide reads, in one-letter code: Oxygen-evolving enhancer protein 1-2, chloroplastic (331 aa).

The N-terminal 57 residues, 1–57 (MATSLQAAATFLQPAKIAASPSRNVHLRSNQTVGKSFGLDSSQARLTCSLHSDLKDF), are a transit peptide targeting the chloroplast. A thylakoid-targeting transit peptide spans 58–84 (AGKCSDAAKIAGFALATSALVVSGAGA).

It belongs to the PsbO family.

It is found in the plastid. The protein localises to the chloroplast thylakoid membrane. Functionally, stabilizes the manganese cluster which is the primary site of water splitting. Regulates dephosphorylation and turnover of the PSII reaction center D1 protein. In Arabidopsis thaliana (Mouse-ear cress), this protein is Oxygen-evolving enhancer protein 1-2, chloroplastic (PSBO2).